A 275-amino-acid polypeptide reads, in one-letter code: Anthracycline biosynthesis protein DauV (275 aa).

2 consecutive VOC domains span residues 8–136 and 150–263; these read APAW…VWRK and SVGW…VVEL.

It participates in antibiotic biosynthesis; daunorubicin biosynthesis. It functions in the pathway antibiotic biosynthesis; carminomycin biosynthesis. Involved in the biosynthesis of the anthracyclines carminomycin and daunorubicin (daunomycin) which are aromatic polyketide antibiotics that exhibit high cytotoxicity and are widely applied in the chemotherapy of a variety of cancers. Acts jointly with DoxA in the conversion of 13-deoxycarminomycin and 13-deoxydaunorubicin to yield carminomycin and daunorubicin, respectively. This chain is Anthracycline biosynthesis protein DauV (dauV), found in Streptomyces sp. (strain C5).